The following is a 259-amino-acid chain: Thiazole synthase (259 aa).

Lys99 serves as the catalytic Schiff-base intermediate with DXP. 1-deoxy-D-xylulose 5-phosphate-binding positions include Gly160, 187 to 188 (AG), and 209 to 210 (NT).

The protein belongs to the ThiG family. As to quaternary structure, homotetramer. Forms heterodimers with either ThiH or ThiS.

Its subcellular location is the cytoplasm. The enzyme catalyses [ThiS sulfur-carrier protein]-C-terminal-Gly-aminoethanethioate + 2-iminoacetate + 1-deoxy-D-xylulose 5-phosphate = [ThiS sulfur-carrier protein]-C-terminal Gly-Gly + 2-[(2R,5Z)-2-carboxy-4-methylthiazol-5(2H)-ylidene]ethyl phosphate + 2 H2O + H(+). The protein operates within cofactor biosynthesis; thiamine diphosphate biosynthesis. Functionally, catalyzes the rearrangement of 1-deoxy-D-xylulose 5-phosphate (DXP) to produce the thiazole phosphate moiety of thiamine. Sulfur is provided by the thiocarboxylate moiety of the carrier protein ThiS. In vitro, sulfur can be provided by H(2)S. The chain is Thiazole synthase from Solibacter usitatus (strain Ellin6076).